Here is a 660-residue protein sequence, read N- to C-terminus: DNA mismatch repair protein MutL (660 aa).

The tract at residues 414 to 433 is disordered; that stretch reads SSVKHASRPQNTFTETDHPN.

Belongs to the DNA mismatch repair MutL/HexB family.

Its function is as follows. This protein is involved in the repair of mismatches in DNA. It is required for dam-dependent methyl-directed DNA mismatch repair. May act as a 'molecular matchmaker', a protein that promotes the formation of a stable complex between two or more DNA-binding proteins in an ATP-dependent manner without itself being part of a final effector complex. The chain is DNA mismatch repair protein MutL from Streptococcus pyogenes serotype M6 (strain ATCC BAA-946 / MGAS10394).